A 288-amino-acid chain; its full sequence is Protease HtpX (288 aa).

2 helical membrane passes run 5 to 25 and 35 to 55; these read IALF…VMSL and GLLV…LLLS. Residue histidine 140 coordinates Zn(2+). Glutamate 141 is an active-site residue. Histidine 144 is a binding site for Zn(2+). 2 helical membrane-spanning segments follow: residues 155 to 175 and 194 to 214; these read LLQG…GGII and IIVF…SMWF. Glutamate 219 contacts Zn(2+).

The protein belongs to the peptidase M48B family. Zn(2+) serves as cofactor.

Its subcellular location is the cell inner membrane. In Stenotrophomonas maltophilia (strain K279a), this protein is Protease HtpX.